Reading from the N-terminus, the 476-residue chain is METTTPKSLYMMTLGCPKNRVDSEVMLGTLRHRGYTLVQEASDAQVIVVNTCAFIGPAKQESVDSILEMAELKKSGACKTLVVTGCLSQRYGEELSKEMPEVDHFLGTSAYAQIGDLLAAEASPRQVIPDPDYIHDANTPRINSMPKYTAYLKISEGCDNACAFCIIPTLRGGQRSRPIDDIVAEAKQLADSGVQELNLVAQDLTAYGHDLPGRPKLHDLLKALVQVDVKWIRLHYAYPRIFPDELIEVMASEPKIARYLDMPVQHVSDKLLLSMKRGRNSEFLKGLLTKLRERVPGLVMRTSLIVGLPGETEEDFEMLKEFVKTQRFERLGVFQYSDEEGTAAYDLPDKVPQKLIERRWREVMAIQKRINREQNKKLVGKRLEVLVEGPAPETEHLLVGRHQGQAPDIDGMVYINDGLAYPGEIVTVEVTEAHDYDLVARVVERPDPKQREHTARDAHPAPLPVAAMQRPAPRAE.

Residues 7-123 (KSLYMMTLGC…IGDLLAAEAS (117 aa)) form the MTTase N-terminal domain. [4Fe-4S] cluster contacts are provided by Cys-16, Cys-52, Cys-86, Cys-158, Cys-162, and Cys-165. The 230-residue stretch at 144 to 373 (SMPKYTAYLK…MAIQKRINRE (230 aa)) folds into the Radical SAM core domain. Residues 376–444 (KKLVGKRLEV…DYDLVARVVE (69 aa)) enclose the TRAM domain. Residues 445-459 (RPDPKQREHTARDAH) are compositionally biased toward basic and acidic residues. The disordered stretch occupies residues 445–476 (RPDPKQREHTARDAHPAPLPVAAMQRPAPRAE).

This sequence belongs to the methylthiotransferase family. RimO subfamily. [4Fe-4S] cluster serves as cofactor.

The protein localises to the cytoplasm. The enzyme catalyses L-aspartate(89)-[ribosomal protein uS12]-hydrogen + (sulfur carrier)-SH + AH2 + 2 S-adenosyl-L-methionine = 3-methylsulfanyl-L-aspartate(89)-[ribosomal protein uS12]-hydrogen + (sulfur carrier)-H + 5'-deoxyadenosine + L-methionine + A + S-adenosyl-L-homocysteine + 2 H(+). Catalyzes the methylthiolation of an aspartic acid residue of ribosomal protein uS12. This Myxococcus xanthus (strain DK1622) protein is Ribosomal protein uS12 methylthiotransferase RimO.